Here is a 308-residue protein sequence, read N- to C-terminus: Apolipoprotein F (308 aa).

It belongs to the apolipoprotein F family.

It is found in the secreted. Its function is as follows. Minor apolipoprotein that associates with LDL. Inhibits cholesteryl ester transfer protein (CETP) activity and appears to be an important regulator of cholesterol transport. Also associates to a lesser degree with VLDL, Apo-AI and Apo-AII. The chain is Apolipoprotein F (Apof) from Rattus norvegicus (Rat).